The following is a 701-amino-acid chain: Ubiquitin thioesterase zranb1-B (701 aa).

RanBP2-type zinc fingers lie at residues 3 to 33 (EDGI…PRPS), 79 to 108 (TSSK…QRRT), and 143 to 173 (IKGQ…PTPN). Residues C10, C13, C24, C27, C85, C88, C99, and C102 each coordinate Zn(2+). The segment covering 108 to 121 (TRSPTESPQSSGSG) has biased composition (polar residues). Positions 108-129 (TRSPTESPQSSGSGLRSIPGPI) are disordered. Zn(2+) contacts are provided by C150, C153, C164, and C167. The interval 197-220 (RWRGGCSSSNSQRRSPPTSKRDSD) is disordered. Residues 202–214 (CSSSNSQRRSPPT) show a composition bias toward polar residues. ANK repeat units lie at residues 253–283 (RKTD…SGGD) and 306–333 (YTLV…QHAA). An OTU domain is found at 425 to 585 (LYALWNRTAG…RGHFSALVAM (161 aa)). Residue C436 is the Nucleophile of the active site. The Proton acceptor role is filled by H578.

Belongs to the peptidase C64 family.

Its subcellular location is the cytoplasm. It is found in the nucleus. It catalyses the reaction Thiol-dependent hydrolysis of ester, thioester, amide, peptide and isopeptide bonds formed by the C-terminal Gly of ubiquitin (a 76-residue protein attached to proteins as an intracellular targeting signal).. Functionally, ubiquitin thioesterase, which specifically hydrolyzes 'Lys-29'-linked and 'Lys-33'-linked diubiquitin. Also cleaves 'Lys-63'-linked chains, but with 40-fold less efficiency compared to 'Lys-29'-linked ones. Positive regulator of the Wnt signaling pathway that deubiquitinates apc protein, a negative regulator of Wnt-mediated transcription. Acts as a regulator of autophagy by mediating deubiquitination of pik3c3/vps34, thereby promoting autophagosome maturation. Plays a role in the regulation of cell morphology and cytoskeletal organization. Required in the stress fiber dynamics and cell migration. The sequence is that of Ubiquitin thioesterase zranb1-B (zranb1-b) from Xenopus laevis (African clawed frog).